A 210-amino-acid polypeptide reads, in one-letter code: Protein RCR2 (210 aa).

The helical transmembrane segment at 41 to 61 (WIFFIFFIVALLILLFSTAKV) threads the bilayer. Positions 125-149 (PNGKTEYLAPPPLSEEQASSTDKDL) are disordered. Position 161 is a phosphoserine (serine 161). The span at 175-199 (NNFVNGQSNRNEQHSPTVESSSFDV) shows a compositional bias: polar residues. The segment at 175-210 (NNFVNGQSNRNEQHSPTVESSSFDVNNAPARAKVSK) is disordered. Threonine 191 bears the Phosphothreonine mark.

It to yeast YBR005W.

It localises to the membrane. The chain is Protein RCR2 (RCR2) from Saccharomyces cerevisiae (strain ATCC 204508 / S288c) (Baker's yeast).